We begin with the raw amino-acid sequence, 160 residues long: Heat shock protein beta-6 (160 aa).

The segment at 1-72 (MEIPVPVQPS…PVAQVPTDPG (72 aa)) is involved in stabilization of the HSPB1:HSBP6 heterodimer. S16 carries the post-translational modification Phosphoserine; by PKA. Positions 55 to 160 (LRAPSVALPV…AQAPPPAAAK (106 aa)) constitute a sHSP domain. Deamidated glutamine is present on Q66.

This sequence belongs to the small heat shock protein (HSP20) family. As to quaternary structure, homodimer. Small heat shock proteins form high molecular mass oligomers containing variable number of monomers; these oligomers display a very flexible quaternary structure easily exchanging their subunits. Heterooligomer with HSPB1; formed through oligomerization of HSPB1:HSBP6 dimers; subunit exchange leads to formation of at least two different heterooligomeric complexes, differing in variable quantities of HSPB1 and HSPB6 homodimers in addition to HSPB1:HSPB6 heterodimers. Heterooligomer with CRYAB; large heterooligomers consist of CRYAB homodimers and HSPB5:HSPB6 heterodimers but lacking HSPB6 homodimers. Interacts with BAG3. Interacts (phosphorylated) with YWHAZ. Interacts with PDE4A and PDE4D; required for maintenance of the non-phosphorylated state of HSPB6 under basal conditions. Interacts with KDR. Interacts with PRKD1. The N-terminus is blocked. Post-translationally, phosphorylated at Ser-16 by PKA and probably PKD1K; required to protect cardiomyocytes from apoptosis.

It is found in the cytoplasm. Its subcellular location is the nucleus. The protein localises to the secreted. Its function is as follows. Small heat shock protein which functions as a molecular chaperone probably maintaining denatured proteins in a folding-competent state. Seems to have versatile functions in various biological processes. Plays a role in regulating muscle function such as smooth muscle vasorelaxation and cardiac myocyte contractility. May regulate myocardial angiogenesis implicating KDR. Overexpression mediates cardioprotection and angiogenesis after induced damage. Stabilizes monomeric YWHAZ thereby supporting YWHAZ chaperone-like activity. This is Heat shock protein beta-6 (HSPB6) from Homo sapiens (Human).